We begin with the raw amino-acid sequence, 115 residues long: NAD(P)H-quinone oxidoreductase subunit M (115 aa).

Belongs to the complex I NdhM subunit family. In terms of assembly, NDH-1 can be composed of about 15 different subunits; different subcomplexes with different compositions have been identified which probably have different functions.

The protein localises to the cellular thylakoid membrane. The enzyme catalyses a plastoquinone + NADH + (n+1) H(+)(in) = a plastoquinol + NAD(+) + n H(+)(out). It carries out the reaction a plastoquinone + NADPH + (n+1) H(+)(in) = a plastoquinol + NADP(+) + n H(+)(out). In terms of biological role, NDH-1 shuttles electrons from an unknown electron donor, via FMN and iron-sulfur (Fe-S) centers, to quinones in the respiratory and/or the photosynthetic chain. The immediate electron acceptor for the enzyme in this species is believed to be plastoquinone. Couples the redox reaction to proton translocation, and thus conserves the redox energy in a proton gradient. Cyanobacterial NDH-1 also plays a role in inorganic carbon-concentration. The sequence is that of NAD(P)H-quinone oxidoreductase subunit M from Prochlorococcus marinus subsp. pastoris (strain CCMP1986 / NIES-2087 / MED4).